Consider the following 206-residue polypeptide: ATP phosphoribosyltransferase (206 aa).

Belongs to the ATP phosphoribosyltransferase family. Short subfamily. In terms of assembly, heteromultimer composed of HisG and HisZ subunits.

It is found in the cytoplasm. It carries out the reaction 1-(5-phospho-beta-D-ribosyl)-ATP + diphosphate = 5-phospho-alpha-D-ribose 1-diphosphate + ATP. Its pathway is amino-acid biosynthesis; L-histidine biosynthesis; L-histidine from 5-phospho-alpha-D-ribose 1-diphosphate: step 1/9. Functionally, catalyzes the condensation of ATP and 5-phosphoribose 1-diphosphate to form N'-(5'-phosphoribosyl)-ATP (PR-ATP). Has a crucial role in the pathway because the rate of histidine biosynthesis seems to be controlled primarily by regulation of HisG enzymatic activity. This is ATP phosphoribosyltransferase from Thermus thermophilus (strain ATCC 27634 / DSM 579 / HB8).